Reading from the N-terminus, the 307-residue chain is Probable acetylxylan esterase A (307 aa).

Positions 1–19 (MILLSYLLTYLLCALTCSA) are cleaved as a signal peptide. Residue S150 is the Charge relay system of the active site. Residues N192 and N270 are each glycosylated (N-linked (GlcNAc...) asparagine).

It belongs to the carbohydrate esterase 1 (CE1) family. AxeA subfamily. As to quaternary structure, monomer.

It localises to the secreted. The enzyme catalyses Deacetylation of xylans and xylo-oligosaccharides.. The protein operates within glycan degradation; xylan degradation. Its function is as follows. Acetylxylan esterase involved in the hydrolysis of xylan, a major structural heterogeneous polysaccharide found in plant biomass representing the second most abundant polysaccharide in the biosphere, after cellulose. Degrades acetylated xylans by cleaving acetyl side groups from the hetero-xylan backbone. This Aspergillus flavus protein is Probable acetylxylan esterase A (axeA).